Here is a 231-residue protein sequence, read N- to C-terminus: Proteasome subunit alpha type-2 (231 aa).

It belongs to the peptidase T1A family. In terms of assembly, the 26S proteasome consists of a 20S proteasome core and two 19S regulatory subunits. The 20S proteasome core is composed of 28 subunits that are arranged in four stacked rings, resulting in a barrel-shaped structure. The two end rings are each formed by seven alpha subunits, and the two central rings are each formed by seven beta subunits. The catalytic chamber with the active sites is on the inside of the barrel.

Its subcellular location is the cytoplasm. It is found in the nucleus. Functionally, the proteasome is a multicatalytic proteinase complex which is characterized by its ability to cleave peptides with Arg, Phe, Tyr, Leu, and Glu adjacent to the leaving group at neutral or slightly basic pH. The proteasome has an ATP-dependent proteolytic activity. The polypeptide is Proteasome subunit alpha type-2 (pas-2) (Caenorhabditis elegans).